The following is a 177-amino-acid chain: uncharacterized protein (177 aa).

Residues 1-175 enclose the Macro domain; it reads MYKNPYGLEI…VFKSIFNSIL (175 aa).

This is an uncharacterized protein from Saccharolobus solfataricus (strain ATCC 35092 / DSM 1617 / JCM 11322 / P2) (Sulfolobus solfataricus).